Reading from the N-terminus, the 74-residue chain is Large ribosomal subunit protein uL29 (74 aa).

The protein belongs to the universal ribosomal protein uL29 family.

The polypeptide is Large ribosomal subunit protein uL29 (rpmC) (Streptomyces coelicolor (strain ATCC BAA-471 / A3(2) / M145)).